The following is a 295-amino-acid chain: Ribosomal RNA small subunit methyltransferase A (295 aa).

S-adenosyl-L-methionine contacts are provided by N29, L31, G56, E77, D102, and N128.

It belongs to the class I-like SAM-binding methyltransferase superfamily. rRNA adenine N(6)-methyltransferase family. RsmA subfamily.

The protein localises to the cytoplasm. It catalyses the reaction adenosine(1518)/adenosine(1519) in 16S rRNA + 4 S-adenosyl-L-methionine = N(6)-dimethyladenosine(1518)/N(6)-dimethyladenosine(1519) in 16S rRNA + 4 S-adenosyl-L-homocysteine + 4 H(+). Functionally, specifically dimethylates two adjacent adenosines (A1518 and A1519) in the loop of a conserved hairpin near the 3'-end of 16S rRNA in the 30S particle. May play a critical role in biogenesis of 30S subunits. This chain is Ribosomal RNA small subunit methyltransferase A, found in Listeria innocua serovar 6a (strain ATCC BAA-680 / CLIP 11262).